The primary structure comprises 204 residues: Tat proofreading chaperone DmsD (204 aa).

The protein belongs to the TorD/DmsD family. DmsD subfamily.

In terms of biological role, required for biogenesis/assembly of DMSO reductase, but not for the interaction of the DmsA signal peptide with the Tat system. May be part of a chaperone cascade complex that facilitates a folding-maturation pathway for the substrate protein. In Salmonella typhi, this protein is Tat proofreading chaperone DmsD.